The primary structure comprises 448 residues: NADP-specific glutamate dehydrogenase (448 aa).

Substrate is bound by residues Lys88, Gln109, and Lys112. Catalysis depends on Lys124, which acts as the Proton donor. Residue Gly163 coordinates substrate. NADP(+) contacts are provided by Thr207 and Asn238. Substrate is bound at residue Ser381.

Belongs to the Glu/Leu/Phe/Val dehydrogenases family. Homohexamer.

It catalyses the reaction L-glutamate + NADP(+) + H2O = 2-oxoglutarate + NH4(+) + NADPH + H(+). In terms of biological role, catalyzes the reversible oxidative deamination of glutamate to alpha-ketoglutarate and ammonia. This chain is NADP-specific glutamate dehydrogenase (gdhA), found in Helicobacter pylori (strain J99 / ATCC 700824) (Campylobacter pylori J99).